The primary structure comprises 488 residues: Pup--protein ligase (488 aa).

A Mg(2+)-binding site is contributed by E34. Residue R77 coordinates ATP. Mg(2+) is bound at residue Y79. Catalysis depends on D81, which acts as the Proton acceptor. Position 87 (E87) interacts with Mg(2+). 2 residues coordinate ATP: T90 and W453.

It belongs to the Pup ligase/Pup deamidase family. Pup-conjugating enzyme subfamily.

The enzyme catalyses ATP + [prokaryotic ubiquitin-like protein]-L-glutamate + [protein]-L-lysine = ADP + phosphate + N(6)-([prokaryotic ubiquitin-like protein]-gamma-L-glutamyl)-[protein]-L-lysine.. The protein operates within protein degradation; proteasomal Pup-dependent pathway. It functions in the pathway protein modification; protein pupylation. Functionally, catalyzes the covalent attachment of the prokaryotic ubiquitin-like protein modifier Pup to the proteasomal substrate proteins, thereby targeting them for proteasomal degradation. This tagging system is termed pupylation. The ligation reaction involves the side-chain carboxylate of the C-terminal glutamate of Pup and the side-chain amino group of a substrate lysine. The protein is Pup--protein ligase of Bifidobacterium dentium (strain ATCC 27534 / DSM 20436 / JCM 1195 / Bd1).